We begin with the raw amino-acid sequence, 118 residues long: Large ribosomal subunit protein bL20 (118 aa).

The protein belongs to the bacterial ribosomal protein bL20 family.

In terms of biological role, binds directly to 23S ribosomal RNA and is necessary for the in vitro assembly process of the 50S ribosomal subunit. It is not involved in the protein synthesizing functions of that subunit. The polypeptide is Large ribosomal subunit protein bL20 (Shigella flexneri serotype 5b (strain 8401)).